The sequence spans 264 residues: tRNA pseudouridine synthase A (264 aa).

The active-site Nucleophile is the Asp-51. Residue Tyr-109 participates in substrate binding.

Belongs to the tRNA pseudouridine synthase TruA family. Homodimer.

It carries out the reaction uridine(38/39/40) in tRNA = pseudouridine(38/39/40) in tRNA. Functionally, formation of pseudouridine at positions 38, 39 and 40 in the anticodon stem and loop of transfer RNAs. This chain is tRNA pseudouridine synthase A, found in Actinobacillus succinogenes (strain ATCC 55618 / DSM 22257 / CCUG 43843 / 130Z).